The chain runs to 371 residues: tRNA-specific 2-thiouridylase MnmA (371 aa).

ATP-binding positions include 16 to 23 (GMSGGVDS) and methionine 42. The interval 102–104 (NPD) is interaction with target base in tRNA. The active-site Nucleophile is the cysteine 107. Cysteines 107 and 204 form a disulfide. Glycine 132 serves as a coordination point for ATP. The interval 154 to 156 (KDQ) is interaction with tRNA. Cysteine 204 acts as the Cysteine persulfide intermediate in catalysis. An interaction with tRNA region spans residues 316-317 (RY).

This sequence belongs to the MnmA/TRMU family.

It is found in the cytoplasm. It carries out the reaction S-sulfanyl-L-cysteinyl-[protein] + uridine(34) in tRNA + AH2 + ATP = 2-thiouridine(34) in tRNA + L-cysteinyl-[protein] + A + AMP + diphosphate + H(+). In terms of biological role, catalyzes the 2-thiolation of uridine at the wobble position (U34) of tRNA, leading to the formation of s(2)U34. The sequence is that of tRNA-specific 2-thiouridylase MnmA from Shewanella pealeana (strain ATCC 700345 / ANG-SQ1).